The sequence spans 79 residues: Acyl carrier protein (79 aa).

The 76-residue stretch at 2 to 77 folds into the Carrier domain; sequence SDVLERVRKI…DAVKFIQERL (76 aa). The residue at position 37 (Ser-37) is an O-(pantetheine 4'-phosphoryl)serine.

This sequence belongs to the acyl carrier protein (ACP) family. Post-translationally, 4'-phosphopantetheine is transferred from CoA to a specific serine of apo-ACP by AcpS. This modification is essential for activity because fatty acids are bound in thioester linkage to the sulfhydryl of the prosthetic group.

It is found in the cytoplasm. The protein operates within lipid metabolism; fatty acid biosynthesis. Its function is as follows. Carrier of the growing fatty acid chain in fatty acid biosynthesis. The protein is Acyl carrier protein of Phenylobacterium zucineum (strain HLK1).